The primary structure comprises 349 residues: Acyl-CoA Delta(11) desaturase (349 aa).

Transmembrane regions (helical) follow at residues 41–61 and 66–86; these read FLTF…CFTS and TLLF…AGAH. The Histidine box-1 motif lies at 86-91; it reads HRLWTH. The short motif at 123-127 is the Histidine box-2 element; it reads HRLHH. A helical transmembrane segment spans residues 184–204; sequence AVPLIGTVCFALPTLIPVYCW. Positions 263-267 match the Histidine box-3 motif; that stretch reads HNYHH. The helical transmembrane segment at 282–302 threads the bilayer; sequence FLNLTTLFIDFCAWFGWAYDL.

Belongs to the fatty acid desaturase type 1 family. Fe cation is required as a cofactor. As to expression, adult female pheromone gland. Increases by two or three orders of magnitude during the first 2 days after adult eclosion.

It localises to the endoplasmic reticulum membrane. It carries out the reaction an 11,12-saturated fatty acyl-CoA + 2 Fe(II)-[cytochrome b5] + O2 + 2 H(+) = an (11Z)-Delta(11)-fatty acyl-CoA + 2 Fe(III)-[cytochrome b5] + 2 H2O. In terms of biological role, catalyzes the formation of Delta(11) fatty acyl precursors in the pheromone gland. This Trichoplusia ni (Cabbage looper) protein is Acyl-CoA Delta(11) desaturase (D11DS).